The following is a 399-amino-acid chain: Integral membrane protein GPR137B (399 aa).

Positions 1-22 (MRPERPRPRGSAPGPMETPPWD) are disordered. The Lumenal portion of the chain corresponds to 1-46 (MRPERPRPRGSAPGPMETPPWDPARNDSLPPTLTPAVPPYVKLGLT). Asn-26 carries N-linked (GlcNAc...) asparagine glycosylation. A helical transmembrane segment spans residues 47 to 67 (VVYTVFYALLFVFIYVQLWLV). The Cytoplasmic portion of the chain corresponds to 68–79 (LRYRHKRLSYQS). Residues 80-100 (VFLFLCLFWASLRTVLFSFYF) traverse the membrane as a helical segment. Over 101-111 (KDFVAANSLSP) the chain is Lumenal. The helical transmembrane segment at 112 to 132 (FVFWLLYCFPVCLQFFTLTLM) threads the bilayer. The Cytoplasmic segment spans residues 133–159 (NLYFTQVIFKAKSKYSPELLKYRLPLY). A helical transmembrane segment spans residues 160 to 180 (LASLFISLVFLLVNLTCAVLV). At 181 to 188 (KTGNWERK) the chain is on the lumenal side. The helical transmembrane segment at 189-209 (VIVSVRVAINDTLFVLCAVSL) threads the bilayer. The Cytoplasmic portion of the chain corresponds to 210–237 (SICLYKISKMSLANIYLESKGSSVCQVT). The helical transmembrane segment at 238–258 (AIGVTVILLYTSRACYNLFIL) threads the bilayer. Residues 259–292 (SFSQNKSVHSFDYDWYNVSDQADLKNQLGDAGYV) are Lumenal-facing. N-linked (GlcNAc...) asparagine glycans are attached at residues Asn-263 and Asn-275. A helical membrane pass occupies residues 293-313 (LFGVVLFVWELLPTTLVVYFF). Residues 314–399 (RVRNPTKDLT…TLDPDKPSLG (86 aa)) are Cytoplasmic-facing.

The protein belongs to the GPR137 family. Interaction with RRAGA; increases RRAGA recruitment to lysosomes. Interacts with MTOR; this interaction is amino acid sensitive. Expressed in kidney, heart, brain and placenta.

It localises to the lysosome membrane. Functionally, lysosomal integral membrane protein that regulates the localization and activity of mTORC1, a signaling complex promoting cell growth in response to growth factors, energy levels, and amino acids. Interacts with Rag GTPases and increases the lysosomial localization and activity of Rag GTPases and thereby regulates mTORC1 translocation and activity in lysosome. Involved in the regulation of lysosomal morphology and autophagy. In terms of biological role, also acts as a negative regulator of osteoclast activity. Involved in interleukin-4-induced M2 macrophage polarization. The sequence is that of Integral membrane protein GPR137B (GPR137B) from Homo sapiens (Human).